The following is a 185-amino-acid chain: Ribosome-recycling factor (185 aa).

This sequence belongs to the RRF family.

Its subcellular location is the cytoplasm. Functionally, responsible for the release of ribosomes from messenger RNA at the termination of protein biosynthesis. May increase the efficiency of translation by recycling ribosomes from one round of translation to another. The polypeptide is Ribosome-recycling factor (Legionella pneumophila (strain Paris)).